Reading from the N-terminus, the 360-residue chain is GTPase Obg (360 aa).

Residues 1-156 (MFVDSVEIII…KCVRLELKLI (156 aa)) form the Obg domain. One can recognise an OBG-type G domain in the interval 157–360 (ADIGLVGFPN…LKFVLLEALP (204 aa)). GTP is bound by residues 163–170 (GFPNAGKS), 188–192 (FTTLV), 210–213 (DIPG), 279–282 (NKCD), and 341–343 (SAL). Mg(2+) contacts are provided by Ser170 and Thr190.

Belongs to the TRAFAC class OBG-HflX-like GTPase superfamily. OBG GTPase family. As to quaternary structure, monomer. The cofactor is Mg(2+).

The protein localises to the cytoplasm. Its function is as follows. An essential GTPase which binds GTP, GDP and possibly (p)ppGpp with moderate affinity, with high nucleotide exchange rates and a fairly low GTP hydrolysis rate. Plays a role in control of the cell cycle, stress response, ribosome biogenesis and in those bacteria that undergo differentiation, in morphogenesis control. The protein is GTPase Obg of Helicobacter pylori (strain Shi470).